The chain runs to 373 residues: Thyroid hormone receptor beta (373 aa).

Residues 1 to 18 are modulating; sequence MPSSMSGYIPSYLDKDEL. Zn(2+) contacts are provided by cysteine 19, cysteine 22, cysteine 36, cysteine 39, cysteine 57, cysteine 63, cysteine 73, and cysteine 76. NR C4-type zinc fingers lie at residues 19 to 39 and 57 to 81; these read CVVC…CEGC and CKYE…FKKC. The nuclear receptor DNA-binding region spans 19–93; sequence CVVCGDKATG…VGMATDLVLD (75 aa). In terms of domain architecture, NR LBD spans 129-373; the sequence is EEWELIQVVT…PPLFLEVFED (245 aa). Positions 194, 243, and 347 each coordinate 3,3',5-triiodo-L-thyronine. L-thyroxine is bound by residues arginine 194, asparagine 243, and histidine 347.

The protein belongs to the nuclear hormone receptor family. NR1 subfamily.

The protein localises to the nucleus. Its function is as follows. Nuclear hormone receptor that can act as a repressor or activator of transcription. High affinity receptor for thyroid hormones, including triiodothyronine and thyroxine. This chain is Thyroid hormone receptor beta (thrb), found in Aquarana catesbeiana (American bullfrog).